The chain runs to 556 residues: Arginine--tRNA ligase 2 (556 aa).

The short motif at 132 to 142 (ANPTGDLHLGH) is the 'HIGH' region element.

It belongs to the class-I aminoacyl-tRNA synthetase family. As to quaternary structure, monomer.

The protein localises to the cytoplasm. The enzyme catalyses tRNA(Arg) + L-arginine + ATP = L-arginyl-tRNA(Arg) + AMP + diphosphate. The sequence is that of Arginine--tRNA ligase 2 from Bacillus thuringiensis subsp. konkukian (strain 97-27).